Consider the following 476-residue polypeptide: Bifunctional protein GlmU (476 aa).

Residues Met-1–Arg-232 form a pyrophosphorylase region. UDP-N-acetyl-alpha-D-glucosamine is bound by residues Leu-9–Gly-12, Lys-23, Gln-75, and Gly-80–Thr-81. Asp-105 is a Mg(2+) binding site. Residues Gly-142, Glu-157, Asn-172, and Asn-230 each coordinate UDP-N-acetyl-alpha-D-glucosamine. Asn-230 contacts Mg(2+). Residues Ala-233–Asp-253 are linker. Residues Gly-254–Gln-476 form an N-acetyltransferase region. UDP-N-acetyl-alpha-D-glucosamine is bound by residues Arg-353 and Lys-371. The active-site Proton acceptor is His-383. UDP-N-acetyl-alpha-D-glucosamine contacts are provided by Tyr-386 and Asn-397. Residues Asn-406–Tyr-407, Ser-425, Ala-443, and Arg-460 contribute to the acetyl-CoA site.

In the N-terminal section; belongs to the N-acetylglucosamine-1-phosphate uridyltransferase family. It in the C-terminal section; belongs to the transferase hexapeptide repeat family. In terms of assembly, homotrimer. Mg(2+) is required as a cofactor.

The protein localises to the cytoplasm. The enzyme catalyses alpha-D-glucosamine 1-phosphate + acetyl-CoA = N-acetyl-alpha-D-glucosamine 1-phosphate + CoA + H(+). It catalyses the reaction N-acetyl-alpha-D-glucosamine 1-phosphate + UTP + H(+) = UDP-N-acetyl-alpha-D-glucosamine + diphosphate. The protein operates within nucleotide-sugar biosynthesis; UDP-N-acetyl-alpha-D-glucosamine biosynthesis; N-acetyl-alpha-D-glucosamine 1-phosphate from alpha-D-glucosamine 6-phosphate (route II): step 2/2. It participates in nucleotide-sugar biosynthesis; UDP-N-acetyl-alpha-D-glucosamine biosynthesis; UDP-N-acetyl-alpha-D-glucosamine from N-acetyl-alpha-D-glucosamine 1-phosphate: step 1/1. It functions in the pathway bacterial outer membrane biogenesis; LPS lipid A biosynthesis. Its function is as follows. Catalyzes the last two sequential reactions in the de novo biosynthetic pathway for UDP-N-acetylglucosamine (UDP-GlcNAc). The C-terminal domain catalyzes the transfer of acetyl group from acetyl coenzyme A to glucosamine-1-phosphate (GlcN-1-P) to produce N-acetylglucosamine-1-phosphate (GlcNAc-1-P), which is converted into UDP-GlcNAc by the transfer of uridine 5-monophosphate (from uridine 5-triphosphate), a reaction catalyzed by the N-terminal domain. The protein is Bifunctional protein GlmU of Geobacter metallireducens (strain ATCC 53774 / DSM 7210 / GS-15).